A 574-amino-acid polypeptide reads, in one-letter code: MDADSINSFFLIGALLAAVSVLLSPVSSRLGIPILLIFLAVGILAGEDGPGGILFDDYSTAYLVSNLALAIILLDGGMRTRVASFRVALWPALSLATFGVAITTSITGVMAAWLFDLHWLQGLLVGAIVGSTDAAAVFSLLKGRSLNERVGATLEIESGSNDPMAVFLTVTLIAILANVDAELSVSFMLISFIKQFGLGIFLGLGGGWLLWKLVNLSKLAEGLYSILVLSGGLMIYAASNKLGGSGILSIYLVGLFLGNKPTRGRHSILNVLDGMTWVSQIGMFLVLGLLLTPSDLLDIWLPGLALAFGMILFARPLAVWLSLLPFKSFSSRDRWFISWVGLRGAVPIILAVFPMMAGLPGAQLYFNLAFFVVLVSLLVQGASLTTAARLAKVELPPKPLPISRSGVEIYPSSEWEVFVYHLSENKWCIGEPLKRLSMPDGTRIAAVFRHNTLLHPSGSTCLEAGDILCVLGQEKSLEALSNLFSQAPETKEVPRFFGDFFIDTEVKLLDLAPIYGLELDEATGDMTVADLVAAELGSHPVLGDQFLWQSLHWVVAGLNEGKVTNVGIRLPAEA.

A run of 13 helical transmembrane segments spans residues 6 to 26, 34 to 54, 58 to 78, 87 to 107, 109 to 129, 173 to 193, 196 to 216, 219 to 239, 242 to 262, 271 to 291, 299 to 319, 335 to 355, and 359 to 379; these read INSF…LSPV, ILLI…GGIL, YSTA…DGGM, VALW…TSIT, VMAA…GAIV, IAIL…ISFI, FGLG…LVNL, LAEG…YAAS, LGGS…NKPT, VLDG…GLLL, IWLP…PLAV, WFIS…VFPM, and LPGA…SLLV. The region spanning 405–486 is the RCK C-terminal domain; it reads SGVEIYPSSE…LEALSNLFSQ (82 aa).

The protein belongs to the monovalent cation:proton antiporter 1 (CPA1) transporter (TC 2.A.36) family. NhaP2 subfamily.

The protein resides in the cell inner membrane. The catalysed reaction is K(+)(in) + H(+)(out) = K(+)(out) + H(+)(in). Its function is as follows. K(+)/H(+) antiporter that extrudes potassium in exchange for external protons and maintains the internal concentration of potassium under toxic levels. This is K(+)/H(+) antiporter NhaP2 from Shewanella sp. (strain ANA-3).